A 277-amino-acid chain; its full sequence is Carbonyl reductase [NADPH] 1 (277 aa).

NADP(+) is bound by residues 10–34, 63–64, and Asn90; these read VTGS…GEVV and DI. Ser30 is subject to Phosphoserine. Residues 95–97 and Gln106 each bind glutathione; that span reads FKV. A substrate-binding site is contributed by Ser140. 193–194 is a binding site for glutathione; it reads AY. Residue Tyr194 is the Proton acceptor of the active site. Residues 194 to 198 and 231 to 233 contribute to the NADP(+) site; these read YGVTK and VRT.

Belongs to the short-chain dehydrogenases/reductases (SDR) family. In terms of assembly, monomer.

The protein resides in the cytoplasm. The catalysed reaction is a secondary alcohol + NADP(+) = a ketone + NADPH + H(+). It catalyses the reaction prostaglandin F2alpha + NADP(+) = prostaglandin E2 + NADPH + H(+). It carries out the reaction prostaglandin E1 + NADP(+) = 15-oxoprostaglandin E1 + NADPH + H(+). The enzyme catalyses prostaglandin D2 + NADP(+) = 15-oxoprostaglandin D2 + NADPH + H(+). The catalysed reaction is menadione + NADPH + H(+) = menadiol + NADP(+). It catalyses the reaction prostaglandin E2 + NADP(+) = 15-oxoprostaglandin E2 + NADPH + H(+). It carries out the reaction prostaglandin F2alpha + NADP(+) = 15-oxoprostaglandin F2alpha + NADPH + H(+). The enzyme catalyses daunorubicin + NADPH + H(+) = 13-dihydrodaunorubicin + NADP(+). The catalysed reaction is S-nitrosoglutathione + NADPH + H(+) = S-(hydroxysulfenamide)glutathione + NADP(+). It catalyses the reaction a primary alcohol + NADP(+) = an aldehyde + NADPH + H(+). It carries out the reaction cortisol + NADPH + H(+) = 20beta-dihydrocortisol + NADP(+). The enzyme catalyses corticosterone + NADPH + H(+) = 20beta-dihydrocorticosterone + NADP(+). Functionally, NADPH-dependent reductase with broad substrate specificity. Catalyzes the reduction of a wide variety of carbonyl compounds including quinones, prostaglandins, menadione, plus various xenobiotics. Catalyzes the reduction of the antitumor anthracyclines doxorubicin and daunorubicin to the cardiotoxic compounds doxorubicinol and daunorubicinol. Can convert prostaglandin E to prostaglandin F2-alpha. Can bind glutathione, which explains its higher affinity for glutathione-conjugated substrates. Catalyzes the reduction of S-nitrosoglutathione. In addition, participates in the glucocorticoid metabolism by catalyzing the NADPH-dependent cortisol/corticosterone into 20beta-dihydrocortisol (20b-DHF) or 20beta-corticosterone (20b-DHB), which are weak agonists of NR3C1 and NR3C2 in adipose tissue. This is Carbonyl reductase [NADPH] 1 from Macaca fascicularis (Crab-eating macaque).